Reading from the N-terminus, the 205-residue chain is Probable ADP-ribosylation factor At2g15310 (205 aa).

Gly-2 carries N-myristoyl glycine lipidation. GTP contacts are provided by residues 24 to 31, 67 to 71, and 126 to 129; these read GLDGSGKT, DIGGQ, and NKQD.

This sequence belongs to the small GTPase superfamily. Arf family.

The protein resides in the golgi apparatus. GTP-binding protein involved in protein trafficking; may modulate vesicle budding and uncoating within the Golgi apparatus. The polypeptide is Probable ADP-ribosylation factor At2g15310 (Arabidopsis thaliana (Mouse-ear cress)).